A 166-amino-acid chain; its full sequence is Putative membrane protein 164 (166 aa).

Residues 1–4 (MYHP) are Intravirion-facing. The helical transmembrane segment at 5–25 (VVQVLIGLILVIILILGFYHL) threads the bilayer. Over 26–166 (KKKSCKTDTD…TIMGIARNIL (141 aa)) the chain is Virion surface.

This sequence belongs to the asfivirus envelope protein p22 family.

It is found in the virion membrane. The protein resides in the host cell membrane. This Ornithodoros (relapsing fever ticks) protein is Putative membrane protein 164.